Consider the following 471-residue polypeptide: 5-hydroxytryptamine receptor 2A (471 aa).

The Extracellular portion of the chain corresponds to 1–80 (MEILCEDNTS…LQEKNWSALL (80 aa)). N-linked (GlcNAc...) asparagine glycans are attached at residues Asn8, Asn38, Asn44, Asn51, and Asn54. The chain crosses the membrane as a helical span at residues 81–97 (TAVVIILTIAGNILVIM). The Cytoplasmic segment spans residues 98 to 111 (AVSLEKKLQNATNY). Residues 112-137 (FLMSLAIADMLLGFLVMPVSMLTILY) traverse the membrane as a helical segment. Topologically, residues 138-146 (GYRWPLPSK) are extracellular. A helical membrane pass occupies residues 147 to 171 (LCAVWIYLDVLFSTASIMHLCAISL). Residues Cys148 and Cys227 are joined by a disulfide bond. Asp155 contacts serotonin. Residues 172 to 174 (DRY) carry the DRY motif; important for ligand-induced conformation changes motif. At 172–191 (DRYVAIQNPIHHSRFNSRTK) the chain is on the cytoplasmic side. Residues 192 to 215 (AFLKIIAVWTISVGVSMPIPVFGL) form a helical membrane-spanning segment. The Extracellular segment spans residues 216–232 (QDDSKVFKQGSCLLADD). A helical transmembrane segment spans residues 233–258 (NFVLIGSFVAFFIPLTIMVITYFLTI). Residues 259–322 (KSLQKEATLC…QSISNEQKAC (64 aa)) are Cytoplasmic-facing. Ser280 carries the phosphoserine modification. The chain crosses the membrane as a helical span at residues 323–348 (KVLGIVFFLFVVMWCPFFITNIMAVI). Residue Asn343 participates in serotonin binding. An intrachain disulfide couples Cys349 to Cys353. Topologically, residues 349 to 356 (CKESCNEH) are extracellular. Residues 357 to 382 (VIGALLNVFVWIGYLSSAVNPLVYTL) traverse the membrane as a helical segment. The short motif at 376-380 (NPLVY) is the NPxxY motif; important for ligand-induced conformation changes and signaling element. At 383-471 (FNKTYRSAFS…NTVNEKVSCV (89 aa)) the chain is on the cytoplasmic side. Residues 469-471 (SCV) carry the PDZ-binding motif.

This sequence belongs to the G-protein coupled receptor 1 family. In terms of assembly, interacts (via C-terminus) with MPDZ and PATJ. May interact (via C-terminus) with MPP3, PRDX6, DLG4, DLG1, CASK, APBA1 and MAGI2. Interacts with GRM2 and DRD2; this may affect signaling.

It is found in the cell membrane. It localises to the cell projection. The protein localises to the dendrite. The protein resides in the axon. Its subcellular location is the cytoplasmic vesicle. It is found in the membrane. It localises to the caveola. The protein localises to the presynapse. With respect to regulation, G-protein coupled receptor activity is regulated by lipids: oleamide increases HTR2A-mediated activity. In terms of biological role, G-protein coupled receptor for 5-hydroxytryptamine (serotonin). Also functions as a receptor for various drugs and psychoactive substances, including mescaline, psilocybin, 1-(2,5-dimethoxy-4-iodophenyl)-2-aminopropane (DOI) and lysergic acid diethylamide (LSD). Ligand binding causes a conformation change that triggers signaling via guanine nucleotide-binding proteins (G proteins) and modulates the activity of downstream effectors. HTR2A is coupled to G(q)/G(11) G alpha proteins and activates phospholipase C-beta, releasing diacylglycerol (DAG) and inositol 1,4,5-trisphosphate (IP3) second messengers that modulate the activity of phosphatidylinositol 3-kinase and promote the release of Ca(2+) ions from intracellular stores, respectively. Beta-arrestin family members inhibit signaling via G proteins and mediate activation of alternative signaling pathways. Affects neural activity, perception, cognition and mood. Plays a role in the regulation of behavior, including responses to anxiogenic situations and psychoactive substances. Plays a role in intestinal smooth muscle contraction, and may play a role in arterial vasoconstriction. The polypeptide is 5-hydroxytryptamine receptor 2A (HTR2A) (Cricetulus griseus (Chinese hamster)).